The sequence spans 536 residues: SNW domain-containing protein 1 (536 aa).

The interval 1–46 (MALTSFLPAPTQLSQDQLEAEEKARSQRSRQTSLVSSRREPPPYGY) is disordered. At Ala-2 the chain carries N-acetylalanine. A Phosphoserine modification is found at Ser-14. Lys-23 is covalently cross-linked (Glycyl lysine isopeptide (Lys-Gly) (interchain with G-Cter in SUMO2)). The segment at 59–79 (GDGGAFPEIHVAQYPLDMGRK) is interaction with PPIL1. Residues Lys-81, Lys-97, Lys-115, Lys-122, Lys-141, Lys-158, and Lys-170 each participate in a glycyl lysine isopeptide (Lys-Gly) (interchain with G-Cter in SUMO2) cross-link. The interval 174 to 339 (AQYIRYTPSQ…KARERRAGIK (166 aa)) is SNW. Phosphoserine occurs at positions 182 and 190. Residue Lys-193 forms a Glycyl lysine isopeptide (Lys-Gly) (interchain with G-Cter in SUMO2) linkage. Positions 209-234 (PPRFKINKKIPRGPPSPPAPVMHSPS) are disordered. Phosphoserine is present on residues Ser-224, Ser-232, and Ser-234. Residues Lys-240, Lys-258, Lys-286, Lys-339, Lys-344, Lys-416, and Lys-441 each participate in a glycyl lysine isopeptide (Lys-Gly) (interchain with G-Cter in SUMO2) cross-link. The disordered stretch occupies residues 311-386 (KMAQKEKEKH…RSKLQRNENR (76 aa)). Position 446 is a phosphoserine (Ser-446). Residue Lys-452 forms a Glycyl lysine isopeptide (Lys-Gly) (interchain with G-Cter in SUMO2) linkage. 2 stretches are compositionally biased toward basic and acidic residues: residues 469-489 (TNRFVPDKEFSGSDRRQRGRE) and 503-530 (KFLEEAKQHGGSKRPSDSSRPKEHEHEG). Residues 469–536 (TNRFVPDKEF…EHEGKKRRKE (68 aa)) are disordered. Residues Ser-479 and Ser-481 each carry the phosphoserine modification. Lys-509 is covalently cross-linked (Glycyl lysine isopeptide (Lys-Gly) (interchain with G-Cter in SUMO2)).

Belongs to the SNW family. Identified in the spliceosome C complex. Associates with U4/U6-U5 tri-small nuclear ribonucleoproteins (U4/U6-U5 tri-snRNPs). Component of the minor spliceosome, which splices U12-type introns. Interacts with SKI, SMAD2,SMAD3, RBPJ, RB1, PABPN1, MAGEA1, SIRT1, FOXN3, U2AF2, PPIL1, DAXX and ATP1B4. Interacts with VDR and RXRA; preferentially associates with VDR:RXRA heterodimers. Interacts with NCOR2. Interacts with MAML1. Interacts with NOTCH1 NICD; the interaction involves multimerized NOTCH1 NICD. Forms a complex with NOTCH1 NICD and MAML1; the association is dissociated by RBPJ. Associates with positive transcription elongation factor b (P-TEFb). Component of the SNARP complex which consists at least of SNIP1, SNW1, THRAP3, BCLAF1 and PNN.

It is found in the nucleus. Its function is as follows. Involved in pre-mRNA splicing as component of the spliceosome. As a component of the minor spliceosome, involved in the splicing of U12-type introns in pre-mRNAs. Required in the specific splicing of CDKN1A pre-mRNA; the function probably involves the recruitment of U2AF2 to the mRNA. May recruit PPIL1 to the spliceosome. May be involved in cyclin-D1/CCND1 mRNA stability through the SNARP complex which associates with both the 3'end of the CCND1 gene and its mRNA. Involved in transcriptional regulation. Modulates TGF-beta-mediated transcription via association with SMAD proteins, MYOD1-mediated transcription via association with PABPN1, RB1-mediated transcriptional repression, and retinoid-X receptor (RXR)- and vitamin D receptor (VDR)-dependent gene transcription in a cell line-specific manner probably involving coactivators NCOA1 and GRIP1. Is involved in NOTCH1-mediated transcriptional activation. Binds to multimerized forms of Notch intracellular domain (NICD) and is proposed to recruit transcriptional coactivators such as MAML1 to form an intermediate preactivation complex which associates with DNA-bound CBF-1/RBPJ to form a transcriptional activation complex by releasing SNW1 and redundant NOTCH1 NICD. The protein is SNW domain-containing protein 1 (SNW1) of Pongo abelii (Sumatran orangutan).